A 239-amino-acid chain; its full sequence is Ribonuclease PH (239 aa).

Residues R87 and 125–127 (GTR) each bind phosphate.

It belongs to the RNase PH family. As to quaternary structure, homohexameric ring arranged as a trimer of dimers.

It carries out the reaction tRNA(n+1) + phosphate = tRNA(n) + a ribonucleoside 5'-diphosphate. Phosphorolytic 3'-5' exoribonuclease that plays an important role in tRNA 3'-end maturation. Removes nucleotide residues following the 3'-CCA terminus of tRNAs; can also add nucleotides to the ends of RNA molecules by using nucleoside diphosphates as substrates, but this may not be physiologically important. Probably plays a role in initiation of 16S rRNA degradation (leading to ribosome degradation) during starvation. This is Ribonuclease PH from Azotobacter vinelandii (strain DJ / ATCC BAA-1303).